Here is a 323-residue protein sequence, read N- to C-terminus: DNA-directed RNA polymerase subunit alpha 1 (323 aa).

The interval 1-228 is alpha N-terminal domain (alpha-NTD); that stretch reads MSNNNSKQEF…EQISVFVSLR (228 aa). The alpha C-terminal domain (alpha-CTD) stretch occupies residues 244–323; that stretch reads IDPILLKPID…DNFRELVEGK (80 aa).

The protein belongs to the RNA polymerase alpha chain family. Homodimer. The RNAP catalytic core consists of 2 alpha, 1 beta, 1 beta' and 1 omega subunit. When a sigma factor is associated with the core the holoenzyme is formed, which can initiate transcription.

It catalyses the reaction RNA(n) + a ribonucleoside 5'-triphosphate = RNA(n+1) + diphosphate. In terms of biological role, DNA-dependent RNA polymerase catalyzes the transcription of DNA into RNA using the four ribonucleoside triphosphates as substrates. This Francisella tularensis subsp. novicida (strain U112) protein is DNA-directed RNA polymerase subunit alpha 1.